The chain runs to 334 residues: Geranylgeranyl pyrophosphate synthase idtG (334 aa).

Isopentenyl diphosphate-binding residues include K49, R52, and H81. Positions 88 and 92 each coordinate Mg(2+). R97 provides a ligand contact to dimethylallyl diphosphate. Residue R98 participates in isopentenyl diphosphate binding. Residues K175, T176, and Q209 each coordinate dimethylallyl diphosphate. Mg(2+) is bound at residue D212. Residues N216, K226, and K236 each contribute to the dimethylallyl diphosphate site.

The protein belongs to the FPP/GGPP synthase family. The cofactor is Mg(2+).

It catalyses the reaction isopentenyl diphosphate + dimethylallyl diphosphate = (2E)-geranyl diphosphate + diphosphate. The enzyme catalyses isopentenyl diphosphate + (2E)-geranyl diphosphate = (2E,6E)-farnesyl diphosphate + diphosphate. The catalysed reaction is isopentenyl diphosphate + (2E,6E)-farnesyl diphosphate = (2E,6E,10E)-geranylgeranyl diphosphate + diphosphate. It functions in the pathway secondary metabolite biosynthesis. Functionally, geranylgeranyl pyrophosphate synthase; part of the gene cluster that mediates the biosynthesis of paspalitrems, indole-diterpene (IDT) mycotoxins that are potent tremorgens in mammals. The geranylgeranyl diphosphate (GGPP) synthase idtG is proposed to catalyze the first step in IDT biosynthesis via catalysis of a series of iterative condensations of isopentenyl diphosphate (IPP) with dimethylallyl diphosphate (DMAPP), geranyl diphosphate (GPP), and farnesyl diphosphate (FPP), to form GGPP. Condensation of indole-3-glycerol phosphate with GGPP by the prenyltransferase idtC then forms 3-geranylgeranylindole (3-GGI). Epoxidation of the two terminal alkenes of the geranylgeranyl moiety by the FAD-dependent monooxygenase idtM, and cyclization by the terpene cyclase idtB then leads to the production of paspaline. The cytochrome P450 monooxygenase idtP then catalyzes oxidative elimination of the pendant methyl group at C-12 of paspaline and generates the C-10 ketone to yield 13-desoxypaxilline. The cytochrome P450 monooxygenase idtQ may catalyze the C-13 oxidation of 13-desoxypaxilline to afford paxilline. Considering that both paspalicine and paxilline were detected in C.paspali, idtQ also catalyzes the formation of paspalinine from 13-desoxypaxilline via paspalicine as an intermediate. Finally, the alpha-prenyltransferase idtF prenylates paspalinine at the C-20 or the C-21 positions to yield paspalitrems A and C, respectively. The hydroxylation of paspalitrem A at C-32 by a still unknown oxidase affords paspalitrem B. The chain is Geranylgeranyl pyrophosphate synthase idtG from Claviceps paspali (Rye ergot fungus).